Consider the following 190-residue polypeptide: uncharacterized protein (190 aa).

Residues 12–34 (LLGLSIFLTTFLFVANFLPGIFA) form a helical membrane-spanning segment.

The protein resides in the membrane. This is an uncharacterized protein from Archaeoglobus fulgidus (strain ATCC 49558 / DSM 4304 / JCM 9628 / NBRC 100126 / VC-16).